A 243-amino-acid polypeptide reads, in one-letter code: Probable transcriptional regulatory protein BG0025 (243 aa).

The protein belongs to the TACO1 family.

It localises to the cytoplasm. The sequence is that of Probable transcriptional regulatory protein BG0025 from Borrelia garinii subsp. bavariensis (strain ATCC BAA-2496 / DSM 23469 / PBi) (Borreliella bavariensis).